The chain runs to 324 residues: D-alanine--D-alanine ligase (324 aa).

The ATP-grasp domain occupies 121–321 (NQYLKAFGVR…IKDVMTDIIE (201 aa)). 149–204 (MEKIGLPCFIKPSLGGSSFGVTKVKTKEQIQPAIVKAFEEAQEVLVEAFMEGTELT) provides a ligand contact to ATP. Positions 275, 288, and 290 each coordinate Mg(2+).

The protein belongs to the D-alanine--D-alanine ligase family. It depends on Mg(2+) as a cofactor. Mn(2+) is required as a cofactor.

The protein localises to the cytoplasm. The catalysed reaction is 2 D-alanine + ATP = D-alanyl-D-alanine + ADP + phosphate + H(+). Its pathway is cell wall biogenesis; peptidoglycan biosynthesis. Functionally, cell wall formation. This is D-alanine--D-alanine ligase from Bacteroides thetaiotaomicron (strain ATCC 29148 / DSM 2079 / JCM 5827 / CCUG 10774 / NCTC 10582 / VPI-5482 / E50).